We begin with the raw amino-acid sequence, 414 residues long: Sensor protein CutS (414 aa).

Residues 1–15 are compositionally biased toward pro residues; sequence MATTPAPPGAPPKPT. A disordered region spans residues 1–21; that stretch reads MATTPAPPGAPPKPTWDPRSA. 2 helical membrane-spanning segments follow: residues 37–57 and 121–141; these read LLYGGMFLIAGILLLSIIYLL and SLLALLGLAVIAFAFGYAMAG. The HAMP domain maps to 142–194; the sequence is RVLSPLGRITRTARAVAGSDLSRRIELDGPDDELKELADTFDDMLERLQRAFT. Positions 202 to 414 constitute a Histidine kinase domain; the sequence is NASHELRTPL…GLVMRVTLPV (213 aa). Position 205 is a phosphohistidine; by autocatalysis (histidine 205).

The protein localises to the cell membrane. It catalyses the reaction ATP + protein L-histidine = ADP + protein N-phospho-L-histidine.. Member of the two-component regulatory system CutS/CutR, involved in the regulation of copper metabolism. The polypeptide is Sensor protein CutS (cutS) (Streptomyces coelicolor (strain ATCC BAA-471 / A3(2) / M145)).